A 39-amino-acid chain; its full sequence is Photosystem II reaction center protein J (39 aa).

Residues 9–29 (LWMVATVGGLAAGGLLILFVF) form a helical membrane-spanning segment.

It belongs to the PsbJ family. As to quaternary structure, PSII is composed of 1 copy each of membrane proteins PsbA, PsbB, PsbC, PsbD, PsbE, PsbF, PsbH, PsbI, PsbJ, PsbK, PsbL, PsbM, PsbT, PsbX, PsbY, PsbZ, Psb30/Ycf12, at least 3 peripheral proteins of the oxygen-evolving complex and a large number of cofactors. It forms dimeric complexes.

The protein localises to the plastid. Its subcellular location is the chloroplast thylakoid membrane. Its function is as follows. One of the components of the core complex of photosystem II (PSII). PSII is a light-driven water:plastoquinone oxidoreductase that uses light energy to abstract electrons from H(2)O, generating O(2) and a proton gradient subsequently used for ATP formation. It consists of a core antenna complex that captures photons, and an electron transfer chain that converts photonic excitation into a charge separation. The chain is Photosystem II reaction center protein J from Emiliania huxleyi (Coccolithophore).